Reading from the N-terminus, the 228-residue chain is 7-cyano-7-deazaguanine synthase (228 aa).

11 to 21 (LSGGLDSATCL) contacts ATP. Residues cysteine 191, cysteine 201, cysteine 204, and cysteine 207 each contribute to the Zn(2+) site.

The protein belongs to the QueC family. It depends on Zn(2+) as a cofactor.

It carries out the reaction 7-carboxy-7-deazaguanine + NH4(+) + ATP = 7-cyano-7-deazaguanine + ADP + phosphate + H2O + H(+). Its pathway is purine metabolism; 7-cyano-7-deazaguanine biosynthesis. Its function is as follows. Catalyzes the ATP-dependent conversion of 7-carboxy-7-deazaguanine (CDG) to 7-cyano-7-deazaguanine (preQ(0)). This is 7-cyano-7-deazaguanine synthase from Azoarcus sp. (strain BH72).